The following is a 251-amino-acid chain: Hydroxyacylglutathione hydrolase (251 aa).

Zn(2+)-binding residues include histidine 54, histidine 56, aspartate 58, histidine 59, histidine 113, aspartate 140, and histidine 178.

It belongs to the metallo-beta-lactamase superfamily. Glyoxalase II family. Monomer. Zn(2+) serves as cofactor.

It carries out the reaction an S-(2-hydroxyacyl)glutathione + H2O = a 2-hydroxy carboxylate + glutathione + H(+). The protein operates within secondary metabolite metabolism; methylglyoxal degradation; (R)-lactate from methylglyoxal: step 2/2. Functionally, thiolesterase that catalyzes the hydrolysis of S-D-lactoyl-glutathione to form glutathione and D-lactic acid. The chain is Hydroxyacylglutathione hydrolase from Synechococcus sp. (strain CC9902).